Here is a 233-residue protein sequence, read N- to C-terminus: MAEDTYEEECDYLFKAVLIGDSAVGKSNLLSRFSKDEFRFDSKPTIGVEFAYRNVHVGDKIIKAQIWDTAGQERFRAITSSYYRGALGALLIYDITRRTTFDNIKKWLFELRDFANPETVVVLVGNKSDLRQSREVEEDEGKTLAESEGLYFLETSALENVNVEEAFLVMIGRIHEVVTQRIASENKSNGAATPHINGNGNGTVLPVGKEIVNIHEVTATQPLLSSSSNCCFK.

20–27 provides a ligand contact to GTP; the sequence is GDSAVGKS. An Effector region motif is present at residues 42 to 50; sequence SKPTIGVEF. Residues 68-72, 126-129, and 156-157 contribute to the GTP site; these read DTAGQ, NKSD, and SA. 2 S-geranylgeranyl cysteine lipidation sites follow: cysteine 230 and cysteine 231.

Belongs to the small GTPase superfamily. Rab family.

The protein localises to the cell membrane. Its function is as follows. Intracellular vesicle trafficking and protein transport. This is Ras-related protein RABA6a (RABA6A) from Arabidopsis thaliana (Mouse-ear cress).